Reading from the N-terminus, the 141-residue chain is MAAARGRGGQVGTKAKVSLGLPVGAVMNCADNSGAKNLYTIACFGIKGHLSKLPSASIGDMILCSVKKGSPKLRKKVLQAIVIRQRRPWRRRDGVFIYFEDNAGVIANPKGEMKGSQITGPVAKECADIWPKVASNAGSVV.

It belongs to the universal ribosomal protein uL14 family.

The protein is Large ribosomal subunit protein uL14 (RPL23) of Tetrahymena thermophila (strain SB210).